Reading from the N-terminus, the 250-residue chain is Triosephosphate isomerase, cytosolic (250 aa).

The substrate site is built by Asn1 and Lys3. His87 (electrophile) is an active-site residue. Glu160 functions as the Proton acceptor in the catalytic mechanism.

Belongs to the triosephosphate isomerase family. In terms of assembly, homodimer.

Its subcellular location is the cytoplasm. It carries out the reaction D-glyceraldehyde 3-phosphate = dihydroxyacetone phosphate. The protein operates within carbohydrate biosynthesis; gluconeogenesis. It participates in carbohydrate degradation; glycolysis; D-glyceraldehyde 3-phosphate from glycerone phosphate: step 1/1. This chain is Triosephosphate isomerase, cytosolic (TPI1), found in Gracilaria gracilis (Red alga).